The primary structure comprises 450 residues: UPF0210 protein CPE1497 (450 aa).

Belongs to the UPF0210 family. In terms of assembly, homodimer.

The polypeptide is UPF0210 protein CPE1497 (Clostridium perfringens (strain 13 / Type A)).